The sequence spans 292 residues: uncharacterized protein (292 aa).

The next 5 membrane-spanning stretches (helical) occupy residues 57-77 (IISLVIFLVGSVLSKHILTLI), 101-121 (VYVFIPIFAGIIAIPVMFNFM), 143-163 (LIYAITFTLRVATCVSFAVLI), 184-204 (VVITITNLAYRYIFLLLNFVL), and 271-291 (IAFLLFSIIITALLVLFDRGI).

The protein belongs to the CbiQ family.

The protein localises to the cell membrane. This is an uncharacterized protein from Methanocaldococcus jannaschii (strain ATCC 43067 / DSM 2661 / JAL-1 / JCM 10045 / NBRC 100440) (Methanococcus jannaschii).